The primary structure comprises 155 residues: Ribosomal RNA large subunit methyltransferase H (155 aa).

S-adenosyl-L-methionine-binding positions include Leu-72, Gly-103, and 122-127 (LGRMVW).

This sequence belongs to the RNA methyltransferase RlmH family. In terms of assembly, homodimer.

The protein localises to the cytoplasm. It catalyses the reaction pseudouridine(1915) in 23S rRNA + S-adenosyl-L-methionine = N(3)-methylpseudouridine(1915) in 23S rRNA + S-adenosyl-L-homocysteine + H(+). Specifically methylates the pseudouridine at position 1915 (m3Psi1915) in 23S rRNA. The protein is Ribosomal RNA large subunit methyltransferase H of Cereibacter sphaeroides (strain KD131 / KCTC 12085) (Rhodobacter sphaeroides).